Reading from the N-terminus, the 282-residue chain is MVQQGFSIDLILARSREEAADGKDSMSSRPHIPCAPQPLPPNKYAKEMPRRKDGQDVQEHSSWSLGEQGKKLQYSSPSSAALHRSWGSSDDFSSVGSEDDSTEGSPSPMRNSQETETDHRGESPKSDLQRHLRTAFTPQQISKLEQAFNKQRYLGASERKKLATSLRLSEIQVKTWFQNRRMKLKRQIQDQQHNMVPPPVCYPQTFPYYPGVLPVPLNSGSFYQPPAHPFQAPQNSYIPDPRFIPQPLPHHIRMSVALQQQYPPLGLPPGRYFTGLASKNDG.

Basic and acidic residues-rich tracts occupy residues 17–26 (EEAADGKDSM) and 44–59 (YAKE…DVQE). A disordered region spans residues 17 to 128 (EEAADGKDSM…HRGESPKSDL (112 aa)). Composition is skewed to polar residues over residues 86 to 96 (WGSSDDFSSVG) and 103 to 114 (EGSPSPMRNSQE). Basic and acidic residues predominate over residues 116–128 (ETDHRGESPKSDL). A DNA-binding region (homeobox) is located at residues 129 to 188 (QRHLRTAFTPQQISKLEQAFNKQRYLGASERKKLATSLRLSEIQVKTWFQNRRMKLKRQI).

As to expression, expressed in the ventral marginal zone of blastulae. At early gastrulation, expression begins to spread to the animal pole (ectoderm), and at stage 11.5 is expressed in a gradient across the animal cap, with levels highest in the ventral region. At the end of gastrulation, predominantly localized to the ventral and lateral regions of the closing slit blastopore. Also expressed at a low level in ventral endoderm.

The protein localises to the nucleus. Functionally, transcriptional repressor. Acts in a ventral signaling pathway downstream of bmp4, which suppresses dorsal mesoderm formation and leads to both ventral mesoderm and ventral ectoderm formation. Acts in the ectoderm to simultaneously specify epidermal lineages and restrict neuralization. Represses transcription of dorsal-specific genes. Binds to DNA, with preference for the target sequences 5'-TAATGC-3' and 5'-TAATTG-3'. Acts in a pathway downstream of bmp4 and fgf to negatively regulate erythroid specification. The protein is Homeobox protein pv.1 of Xenopus laevis (African clawed frog).